Consider the following 395-residue polypeptide: MAKEKFARTKVHMNVGTIGHVDHGKTTLSAAITSYCAKKFGDKQLKYDEIDNAPEEKARGITINTRHLEYQSDRRHYAHIDCPGHADYVKNMITGAAQMDGGILVVSAPDGVMPQTKEHLLLARQVGVPSIIVFLNKVDLVDDPELLELVEEEVRDALAGYGFSRETPIVKGSAFKALQDGASPEDAACIEELLAAMDSYFEDPVRDDARPFLLSIEDVYTISGRGTVVTGRIECGVISLNEEVEIVGIKPTKKTVVTGIEMFNKLLDQGIAGDNVGLLLRGVDKKEVERGQVLSKPGSIKPHTKFEAQIYVLSKEEGGRHSPFFQGYRPQFYFRTTDITGTISLPEGVDMVKPGDNTKIIGELIHPIAMDKGLKLAIREGGRTIASGQVTEILL.

A tr-type G domain is found at 10–205; sequence KVHMNVGTIG…AMDSYFEDPV (196 aa). The segment at 19-26 is G1; that stretch reads GHVDHGKT. 19–26 is a binding site for GTP; it reads GHVDHGKT. Thr26 is a binding site for Mg(2+). The G2 stretch occupies residues 60 to 64; it reads GITIN. The G3 stretch occupies residues 81 to 84; it reads DCPG. GTP-binding positions include 81–85 and 136–139; these read DCPGH and NKVD. The G4 stretch occupies residues 136-139; that stretch reads NKVD. Residues 173–175 are G5; the sequence is SAF.

This sequence belongs to the TRAFAC class translation factor GTPase superfamily. Classic translation factor GTPase family. EF-Tu/EF-1A subfamily. In terms of assembly, monomer.

The protein localises to the cytoplasm. It catalyses the reaction GTP + H2O = GDP + phosphate + H(+). Functionally, GTP hydrolase that promotes the GTP-dependent binding of aminoacyl-tRNA to the A-site of ribosomes during protein biosynthesis. In Treponema pallidum (strain Nichols), this protein is Elongation factor Tu.